The following is a 176-amino-acid chain: Ribosome maturation factor RimM (176 aa).

The region spanning 92 to 165 (EDEFLYSDLI…RLVVVPPVYA (74 aa)) is the PRC barrel domain.

It belongs to the RimM family. In terms of assembly, binds ribosomal protein uS19.

It is found in the cytoplasm. Functionally, an accessory protein needed during the final step in the assembly of 30S ribosomal subunit, possibly for assembly of the head region. Essential for efficient processing of 16S rRNA. May be needed both before and after RbfA during the maturation of 16S rRNA. It has affinity for free ribosomal 30S subunits but not for 70S ribosomes. The chain is Ribosome maturation factor RimM from Paramagnetospirillum magneticum (strain ATCC 700264 / AMB-1) (Magnetospirillum magneticum).